The sequence spans 128 residues: Ribonuclease pancreatic (128 aa).

The span at 1 to 13 (GESRAEKFQRQHM) shows a compositional bias: basic and acidic residues. The segment at 1 to 24 (GESRAEKFQRQHMDSGSSPSSSST) is disordered. Positions 7 and 10 each coordinate substrate. H12 (proton acceptor) is an active-site residue. Disulfide bonds link C26-C84, C40-C95, C58-C110, and C65-C72. The N-linked (GlcNAc...) asparagine glycan is linked to N34. Substrate is bound by residues 41–45 (KSVNT), K66, and R85. The active-site Proton donor is the H119.

It belongs to the pancreatic ribonuclease family. In terms of assembly, monomer. Interacts with and forms tight 1:1 complexes with RNH1. Dimerization of two such complexes may occur. Interaction with RNH1 inhibits this protein. In terms of tissue distribution, pancreas and other tissues and body fluids (indicating it may have other physiological functions besides its role in digestion).

The protein resides in the secreted. It catalyses the reaction an [RNA] containing cytidine + H2O = an [RNA]-3'-cytidine-3'-phosphate + a 5'-hydroxy-ribonucleotide-3'-[RNA].. It carries out the reaction an [RNA] containing uridine + H2O = an [RNA]-3'-uridine-3'-phosphate + a 5'-hydroxy-ribonucleotide-3'-[RNA].. Functionally, endonuclease that catalyzes the cleavage of RNA on the 3' side of pyrimidine nucleotides. Acts on single-stranded and double-stranded RNA. The chain is Ribonuclease pancreatic (RNASE1) from Semnopithecus entellus (Northern plains gray langur).